An 854-amino-acid polypeptide reads, in one-letter code: Discoidin domain-containing receptor 2 (854 aa).

The first 21 residues, methionine 1 to alanine 21, serve as a signal peptide directing secretion. Topologically, residues lysine 22–arginine 399 are extracellular. The region spanning cysteine 30–cysteine 185 is the F5/8 type C domain. Cystine bridges form between cysteine 30-cysteine 185 and cysteine 73-cysteine 177. Asparagine 121, asparagine 213, asparagine 261, asparagine 280, and asparagine 372 each carry an N-linked (GlcNAc...) asparagine glycan. Residues isoleucine 400–tryptophan 421 form a helical membrane-spanning segment. The Cytoplasmic portion of the chain corresponds to arginine 422–glutamate 854. Residues serine 452 to tyrosine 471 form a disordered region. Positions asparagine 455 to serine 469 are enriched in low complexity. Tyrosine 471 is modified (phosphotyrosine; by SRC and autocatalysis). A Protein kinase domain is found at leucine 563–leucine 848. ATP is bound by residues leucine 569 to valine 577 and lysine 608. The active-site Proton acceptor is aspartate 709. Residues tyrosine 735, tyrosine 739, and tyrosine 740 each carry the phosphotyrosine; by SRC and autocatalysis modification.

It belongs to the protein kinase superfamily. Tyr protein kinase family. Insulin receptor subfamily. Binds hydroxyproline-rich sequence motifs in fibrillar, glycosylated collagen, such as the GQOGVMGFO motif, where O stands for hydroxyproline. Interacts with SRC. Interacts (tyrosine phosphorylated) with SHC1. In terms of processing, N-glycosylated. Tyrosine phosphorylated in response to collagen binding. Phosphorylated by SRC; this is required for activation and subsequent autophosphorylation on additional tyrosine residues. Widely expressed. Detected in lung, ovary, skin and in testis Leydig cells (at protein level). Widely expressed. Detected at high levels in heart, lung, skeletal muscle, central nervous system (CNS) and kidney, and at lower levels in brain and testis. Detected in chondrocytes in tibia growth plates of young mice.

The protein resides in the cell membrane. The enzyme catalyses L-tyrosyl-[protein] + ATP = O-phospho-L-tyrosyl-[protein] + ADP + H(+). Present in an inactive state in the absence of collagen binding and phosphorylation by SRC. Tyrosine phosphorylation enhances the affinity for ATP and the catalytic activity. Its function is as follows. Tyrosine kinase that functions as a cell surface receptor for fibrillar collagen and regulates cell differentiation, remodeling of the extracellular matrix, cell migration and cell proliferation. Required for normal bone development. Regulates osteoblast differentiation and chondrocyte maturation via a signaling pathway that involves MAP kinases and leads to the activation of the transcription factor RUNX2. Regulates remodeling of the extracellular matrix by up-regulation of the collagenases MMP1, MMP2 and MMP13, and thereby facilitates cell migration and tumor cell invasion. Promotes fibroblast migration and proliferation, and thereby contributes to cutaneous wound healing. This Mus musculus (Mouse) protein is Discoidin domain-containing receptor 2 (Ddr2).